Here is a 686-residue protein sequence, read N- to C-terminus: Protein SDA1 homolog (686 aa).

Phosphoserine occurs at positions 232, 234, and 236. Residues 254-315 (KKGSKNKKKL…SCKERFEVKM (62 aa)) are a coiled coil. The tract at residues 484-508 (LEKEENTENDEDGWESASLSEEEED) is disordered. Acidic residues predominate over residues 490 to 508 (TENDEDGWESASLSEEEED). The residue at position 551 (threonine 551) is a Phosphothreonine. Residues 563–586 (MKKEMDAAPGKAQKRKYLDMDSDE) are disordered. Phosphoserine occurs at positions 584, 588, and 594. Residues 604-649 (KPKSDKETRLATAMAGRTDRKEFVRKKTKINPFSSSTNKEKKKQKN) are disordered.

It belongs to the SDA1 family.

The protein resides in the nucleus. The protein localises to the nucleolus. Required for 60S pre-ribosomal subunits export to the cytoplasm. This chain is Protein SDA1 homolog (Sdad1), found in Rattus norvegicus (Rat).